Consider the following 546-residue polypeptide: 2-isopropylmalate synthase (546 aa).

The Pyruvate carboxyltransferase domain occupies 5–274; that stretch reads ITIFDTTLRD…TADVHTEHLT (270 aa). 4 residues coordinate Mn(2+): Asp14, His209, His211, and Asn245. The tract at residues 415 to 546 is regulatory domain; it reads RLDQFSVHLS…QNGIMHTYGE (132 aa).

Belongs to the alpha-IPM synthase/homocitrate synthase family. LeuA type 1 subfamily. Homodimer. It depends on Mn(2+) as a cofactor.

The protein resides in the cytoplasm. The catalysed reaction is 3-methyl-2-oxobutanoate + acetyl-CoA + H2O = (2S)-2-isopropylmalate + CoA + H(+). It participates in amino-acid biosynthesis; L-leucine biosynthesis; L-leucine from 3-methyl-2-oxobutanoate: step 1/4. Functionally, catalyzes the condensation of the acetyl group of acetyl-CoA with 3-methyl-2-oxobutanoate (2-ketoisovalerate) to form 3-carboxy-3-hydroxy-4-methylpentanoate (2-isopropylmalate). The polypeptide is 2-isopropylmalate synthase (Salinibacter ruber (strain M8)).